Consider the following 320-residue polypeptide: Ferrochelatase (320 aa).

Fe cation is bound by residues His194 and Glu275.

Belongs to the ferrochelatase family.

The protein localises to the cytoplasm. The catalysed reaction is heme b + 2 H(+) = protoporphyrin IX + Fe(2+). The protein operates within porphyrin-containing compound metabolism; protoheme biosynthesis; protoheme from protoporphyrin-IX: step 1/1. Its function is as follows. Catalyzes the ferrous insertion into protoporphyrin IX. The protein is Ferrochelatase of Xylella fastidiosa (strain M23).